The chain runs to 879 residues: MSTVEPNAYDPQQVETSAQQFWDATRAFQVDENSDKPKFYCLSMLPYPSGALHMGHVRNYTISDVVSRYKRMTGHNVLQPMGWDAFGLPAENAAIKNKTAPAKWTYANIEHMRAQLKSLGYAIDWSREFATCTPDYYVHEQRMFTRLMRKGLAYRRNAVVNWDPIDQTVLANEQVIDGRGWRSGALVEKREIPQWFLRITDYAQELLDGLDQLDGWPDSVKTMQRNWIGRSEGLEIQFDVRDTTGAALDPLRVFTTRPDTLMGVTFVSIAAEHPLAQHAAKSNPELASMLETLKHGGVSEAELETQEKRGMATGLTAVHPISGEEVPVWVANFVLMGYGTGAVMAVPGHDQRDFEFANKYGLPIVQVVKLREPRNDDEQAWDATQWRDWYTDKSRELELINSAEFDGLDYHGAFEALAERFERKGQGQRRINYRLRDWGVSRQRYWGCPIPVIYCAKCGAVPVPEDQLPVVLPENVEFAGTGSPIKTDPTWRQTTCPECGGPAERETDTFDTFMESSWYVARYTSPNARDMVDRRANYWMPADLYVGGIEHAILHLMYFRFYHKLMRDARLVDSDEPVTNLLTQGMVIAETFYRDADNGGKDWINPADVEIQRDERGRVVGASLIADGQPVHIGGTEKMSKSKNNGVDPQAMVAKYGADTVRLFSMFAAPPEQSLEWNEAGVDGMARFMRRLWVQVHKHVGEGAAALDVASLSAEQKAIRRKTHETIGKVDDDYGRRHSFNTAIAAVMELSNALAKFDDASAQGRAVRQEALEAMVLLLNPITPHASHALWQVLGRGETLLENVPFPQVDAAALVRDALTLAIQVNGKLRGTIEVAADAAREQIEALALAEPNAAKFLDGLSVRKIIIVPGKIVNIVAG.

Residues 46–56 (PYPSGALHMGH) carry the 'HIGH' region motif. Residues 638–642 (KMSKS) carry the 'KMSKS' region motif. Residue Lys-641 participates in ATP binding.

Belongs to the class-I aminoacyl-tRNA synthetase family.

The protein localises to the cytoplasm. It catalyses the reaction tRNA(Leu) + L-leucine + ATP = L-leucyl-tRNA(Leu) + AMP + diphosphate. The protein is Leucine--tRNA ligase of Xanthomonas campestris pv. campestris (strain 8004).